The following is a 321-amino-acid chain: NADH-ubiquinone oxidoreductase chain 1 (321 aa).

Helical transmembrane passes span 5–25 (LVTL…AFLT), 74–94 (LLIL…APIP), 104–124 (LGLL…LWAG), 151–171 (GIIL…LLTI), 175–195 (YTWL…STLA), 227–247 (FFLA…ILFI), 256–276 (ELFL…FLWI), and 296–316 (FLPM…SISG).

Belongs to the complex I subunit 1 family.

The protein resides in the mitochondrion inner membrane. The catalysed reaction is a ubiquinone + NADH + 5 H(+)(in) = a ubiquinol + NAD(+) + 4 H(+)(out). Functionally, core subunit of the mitochondrial membrane respiratory chain NADH dehydrogenase (Complex I) that is believed to belong to the minimal assembly required for catalysis. Complex I functions in the transfer of electrons from NADH to the respiratory chain. The immediate electron acceptor for the enzyme is believed to be ubiquinone. The polypeptide is NADH-ubiquinone oxidoreductase chain 1 (MT-ND1) (Varanus baritji (Black-spotted ridge-tailed monitor)).